Here is a 123-residue protein sequence, read N- to C-terminus: Basic myotoxic phospholipase A2 PhTX-II (123 aa).

Disulfide bonds link Cys26–Cys116, Cys28–Cys45, Cys44–Cys95, Cys50–Cys123, Cys51–Cys88, Cys58–Cys81, and Cys75–Cys86. Ca(2+)-binding residues include Tyr27, Gly29, and Gly31. Residue His48 is part of the active site. Ca(2+) is bound at residue Asp49. Asp89 is a catalytic residue.

Monomer. Requires Ca(2+) as cofactor. In terms of tissue distribution, expressed by the venom gland.

It is found in the secreted. The catalysed reaction is a 1,2-diacyl-sn-glycero-3-phosphocholine + H2O = a 1-acyl-sn-glycero-3-phosphocholine + a fatty acid + H(+). Its activity is regulated as follows. P-bromophenacyl bromide (BPB) completely inhibits the catalytic and edematogenic activities. Enzymatic activity is also diminished by EDTA, heparin and crotapotins F2 and F3 from C.d.collilineatus. Inhibited by divalent cations different from calcium ions (cadmium, magnesium, manganese, zinc), since they act as competitive antagonists of this cofactor. Its function is as follows. Snake venom phospholipase A2 (PLA2) that induces myotoxicity and local edema in mice. In addition, it causes neuromuscular blockade in avian neuromuscular preparations with a significant direct action on skeletal muscle function. Myotoxic action is exerted by both enzymatic and non-enzymatic mechanisms. PLA2 catalyzes the calcium-dependent hydrolysis of the 2-acyl groups in 3-sn-phosphoglycerides. This is Basic myotoxic phospholipase A2 PhTX-II from Bothrocophias hyoprora (Amazonian hognose viper).